A 249-amino-acid chain; its full sequence is Triosephosphate isomerase (249 aa).

9–11 contributes to the substrate binding site; it reads NWK. The Electrophile role is filled by histidine 94. Glutamate 166 (proton acceptor) is an active-site residue. Substrate-binding positions include glycine 172, serine 211, and 232–233; that span reads GG.

The protein belongs to the triosephosphate isomerase family. Homodimer.

Its subcellular location is the cytoplasm. The enzyme catalyses D-glyceraldehyde 3-phosphate = dihydroxyacetone phosphate. It functions in the pathway carbohydrate biosynthesis; gluconeogenesis. The protein operates within carbohydrate degradation; glycolysis; D-glyceraldehyde 3-phosphate from glycerone phosphate: step 1/1. In terms of biological role, involved in the gluconeogenesis. Catalyzes stereospecifically the conversion of dihydroxyacetone phosphate (DHAP) to D-glyceraldehyde-3-phosphate (G3P). The chain is Triosephosphate isomerase from Dechloromonas aromatica (strain RCB).